The chain runs to 894 residues: Peroxisomal hydratase-dehydrogenase-epimerase (894 aa).

2 short-chain dehydrogenase like regions span residues 6 to 230 and 311 to 523; these read RFDG…HKNN and DFKG…CSDK. 7 residues coordinate NADP(+): V14, K53, N99, R132, Y164, K168, and A197. Y164 acts as the Proton acceptor in catalysis. The active-site Lowers pKa of active site Tyr is K168. The active-site Proton acceptor is Y458. Residues H693, G694, and K723 each coordinate (3R)-3-hydroxydecanoyl-CoA. Residues 763–782 form a disordered region; it reads KKPADRGASTAANKPPARSP. In terms of domain architecture, MaoC-like spans 776–887; sequence KPPARSPDAV…VKETGKLAIS (112 aa). (3R)-3-hydroxydecanoyl-CoA contacts are provided by D803, N805, G826, F851, and G853.

It belongs to the short-chain dehydrogenases/reductases (SDR) family. In terms of assembly, monomer.

Its subcellular location is the peroxisome. The enzyme catalyses a (3R)-3-hydroxyacyl-CoA = a (2E)-enoyl-CoA + H2O. The catalysed reaction is a (3R)-3-hydroxyacyl-CoA + NAD(+) = a 3-oxoacyl-CoA + NADH + H(+). It functions in the pathway lipid metabolism; fatty acid beta-oxidation. Second trifunctional enzyme acting on the beta-oxidation pathway for fatty acids, possessing hydratase-dehydrogenase-epimerase activities. Converts trans-2-enoyl-CoA via D-3-hydroxyacyl-CoA to 3-ketoacyl-CoA. The polypeptide is Peroxisomal hydratase-dehydrogenase-epimerase (fox-2) (Neurospora crassa (strain ATCC 24698 / 74-OR23-1A / CBS 708.71 / DSM 1257 / FGSC 987)).